Reading from the N-terminus, the 518-residue chain is Glutamate--cysteine ligase (518 aa).

Belongs to the glutamate--cysteine ligase type 1 family. Type 1 subfamily.

It carries out the reaction L-cysteine + L-glutamate + ATP = gamma-L-glutamyl-L-cysteine + ADP + phosphate + H(+). It functions in the pathway sulfur metabolism; glutathione biosynthesis; glutathione from L-cysteine and L-glutamate: step 1/2. This is Glutamate--cysteine ligase from Salmonella arizonae (strain ATCC BAA-731 / CDC346-86 / RSK2980).